A 209-amino-acid chain; its full sequence is NAD(P)H-quinone oxidoreductase subunit N, chloroplastic (209 aa).

The transit peptide at 1–45 (MGSRAICIQRVAPPCFEASQVKKIKTVGSFLVNTRSKRRRSTGVK) directs the protein to the chloroplast.

This sequence belongs to the NDH complex subunit N family. As to quaternary structure, part of the chloroplast NDH complex, composed of a mixture of chloroplast and nucleus encoded subunits. Component of the NDH subcomplex A, at least composed of ndhH, ndhI, ndhJ, ndhK, ndhL, ndhM, ndhN and ndhO.

It localises to the plastid. It is found in the chloroplast thylakoid membrane. The catalysed reaction is a plastoquinone + NADH + (n+1) H(+)(in) = a plastoquinol + NAD(+) + n H(+)(out). The enzyme catalyses a plastoquinone + NADPH + (n+1) H(+)(in) = a plastoquinol + NADP(+) + n H(+)(out). In terms of biological role, NDH shuttles electrons from NAD(P)H:plastoquinone, via FMN and iron-sulfur (Fe-S) centers, to quinones in the photosynthetic chain and possibly in a chloroplast respiratory chain. The immediate electron acceptor for the enzyme in this species is believed to be plastoquinone. Couples the redox reaction to proton translocation, and thus conserves the redox energy in a proton gradient. In Arabidopsis thaliana (Mouse-ear cress), this protein is NAD(P)H-quinone oxidoreductase subunit N, chloroplastic.